The chain runs to 162 residues: Large ribosomal subunit protein uL15 (162 aa).

The disordered stretch occupies residues 1-44; that stretch reads MKLNELRDNPGATKNRIRVGRGIGSGKGKTAGRGVKGQKSREGV. The span at 21-35 shows a compositional bias: gly residues; sequence RGIGSGKGKTAGRGV.

It belongs to the universal ribosomal protein uL15 family. As to quaternary structure, part of the 50S ribosomal subunit.

In terms of biological role, binds to the 23S rRNA. In Rhodospirillum rubrum (strain ATCC 11170 / ATH 1.1.1 / DSM 467 / LMG 4362 / NCIMB 8255 / S1), this protein is Large ribosomal subunit protein uL15.